The chain runs to 338 residues: Heat-inducible transcription repressor HrcA (338 aa).

Belongs to the HrcA family.

In terms of biological role, negative regulator of class I heat shock genes (grpE-dnaK-dnaJ and groELS operons). Prevents heat-shock induction of these operons. The sequence is that of Heat-inducible transcription repressor HrcA from Bacillus cereus (strain B4264).